A 295-amino-acid chain; its full sequence is Small ribosomal subunit protein uS2 (295 aa).

This sequence belongs to the universal ribosomal protein uS2 family. Component of the small ribosomal subunit. Mature ribosomes consist of a small (40S) and a large (60S) subunit. The 40S subunit contains about 33 different proteins and 1 molecule of RNA (18S). The 60S subunit contains about 49 different proteins and 3 molecules of RNA (25S, 5.8S and 5S). Interacts with RPS21.

The protein localises to the cytoplasm. In terms of biological role, required for the assembly and/or stability of the 40S ribosomal subunit. Required for the processing of the 20S rRNA-precursor to mature 18S rRNA in a late step of the maturation of 40S ribosomal subunits. The sequence is that of Small ribosomal subunit protein uS2 from Paracoccidioides brasiliensis (strain Pb03).